Reading from the N-terminus, the 211-residue chain is Ribosomal RNA large subunit methyltransferase E (211 aa).

S-adenosyl-L-methionine contacts are provided by G60, W62, D85, D101, and D126. K166 (proton acceptor) is an active-site residue.

The protein belongs to the class I-like SAM-binding methyltransferase superfamily. RNA methyltransferase RlmE family.

It is found in the cytoplasm. The catalysed reaction is uridine(2552) in 23S rRNA + S-adenosyl-L-methionine = 2'-O-methyluridine(2552) in 23S rRNA + S-adenosyl-L-homocysteine + H(+). Functionally, specifically methylates the uridine in position 2552 of 23S rRNA at the 2'-O position of the ribose in the fully assembled 50S ribosomal subunit. The polypeptide is Ribosomal RNA large subunit methyltransferase E (Bordetella petrii (strain ATCC BAA-461 / DSM 12804 / CCUG 43448)).